A 1104-amino-acid chain; its full sequence is Protein transport protein SEC31 homolog B (1104 aa).

WD repeat units follow at residues 5–45 (KGVG…EIFK), 62–109 (PSSE…GSQP), 120–160 (VHKG…EPSH), 170–210 (ATQG…PIIN), 214–257 (SVRR…SPVR), 261–301 (GHQR…IVAE), and 304–344 (AGNN…RYGV). T526 bears the Phosphothreonine mark. The disordered stretch occupies residues 527 to 562 (PVSTSAKDFMPSDTDFSTKGEETQEMQEEEEESSDP). The span at 549 to 560 (TQEMQEEEEESS) shows a compositional bias: acidic residues. The stretch at 662–707 (TLCDALASKLMAAGNTLAAVLCYICAGNVDRTVEIWSRSLANERDG) is one WD 8 repeat. 4 disordered regions span residues 782–811 (LSAE…PTQA), 851–874 (HQAQ…PSMR), 892–931 (QQPT…QYPN), and 952–994 (TPGV…SNVP). 3 stretches are compositionally biased toward polar residues: residues 786–811 (PETN…PTQA), 863–874 (PAPTSNAQPSMR), and 892–908 (QQPT…SNNA). Positions 959–977 (SVQPASPPTQQAAAQAAPA) are enriched in low complexity.

The protein belongs to the WD repeat SEC31 family. In terms of assembly, interacts with SEC13A and SEC13B.

It is found in the golgi apparatus. The protein resides in the endoplasmic reticulum. In terms of biological role, required for protein transport from the endoplasmic reticulum to the Golgi apparatus. The protein is Protein transport protein SEC31 homolog B of Arabidopsis thaliana (Mouse-ear cress).